The sequence spans 307 residues: UDP-3-O-acyl-N-acetylglucosamine deacetylase (307 aa).

Residues His-78, His-241, and Asp-245 each coordinate Zn(2+). His-268 (proton donor) is an active-site residue.

This sequence belongs to the LpxC family. Zn(2+) serves as cofactor.

It carries out the reaction a UDP-3-O-[(3R)-3-hydroxyacyl]-N-acetyl-alpha-D-glucosamine + H2O = a UDP-3-O-[(3R)-3-hydroxyacyl]-alpha-D-glucosamine + acetate. It functions in the pathway glycolipid biosynthesis; lipid IV(A) biosynthesis; lipid IV(A) from (3R)-3-hydroxytetradecanoyl-[acyl-carrier-protein] and UDP-N-acetyl-alpha-D-glucosamine: step 2/6. Catalyzes the hydrolysis of UDP-3-O-myristoyl-N-acetylglucosamine to form UDP-3-O-myristoylglucosamine and acetate, the committed step in lipid A biosynthesis. This Acidovorax sp. (strain JS42) protein is UDP-3-O-acyl-N-acetylglucosamine deacetylase.